The chain runs to 282 residues: 4-diphosphocytidyl-2-C-methyl-D-erythritol kinase (282 aa).

Residue K9 is part of the active site. Residue P98–S108 participates in ATP binding. Residue D140 is part of the active site.

Belongs to the GHMP kinase family. IspE subfamily. As to quaternary structure, homodimer.

It catalyses the reaction 4-CDP-2-C-methyl-D-erythritol + ATP = 4-CDP-2-C-methyl-D-erythritol 2-phosphate + ADP + H(+). It participates in isoprenoid biosynthesis; isopentenyl diphosphate biosynthesis via DXP pathway; isopentenyl diphosphate from 1-deoxy-D-xylulose 5-phosphate: step 3/6. Functionally, catalyzes the phosphorylation of the position 2 hydroxy group of 4-diphosphocytidyl-2C-methyl-D-erythritol. In Salmonella heidelberg (strain SL476), this protein is 4-diphosphocytidyl-2-C-methyl-D-erythritol kinase.